The sequence spans 813 residues: Cadherin-22 (813 aa).

The signal sequence occupies residues 1 to 33 (MRPRPAGALRAGAALSPVLLLLLLLQLLGHLWA). The Extracellular segment spans residues 34 to 621 (ASTPAPSSLS…AFVMAASLSP (588 aa)). 5 Cadherin domains span residues 61 to 165 (WVWN…EPRF), 166 to 274 (LHGP…PPRF), 275 to 391 (PQKM…PPEF), 392 to 495 (RPPS…NPPE), and 496 to 613 (LATP…TTAF). N-linked (GlcNAc...) asparagine glycosylation occurs at asparagine 159. Residues asparagine 463 and asparagine 609 are each glycosylated (N-linked (GlcNAc...) asparagine). Residues 622-642 (GALIALLVCVLILVVLALLIL) form a helical membrane-spanning segment. The Cytoplasmic segment spans residues 643–813 (TLRRHHKSHL…HRGDDEAPAS (171 aa)). The tract at residues 696-726 (GGDPGGGAASPPQAASSSERHSLPRGPSSPE) is disordered.

In terms of tissue distribution, strongly expressed in the pituitary gland and the brain (in the inner granular and glomerular layers of the olfactory bulb, anterior olfactory nucleus, primary olfactory cortex, Purkinje cell layer of cerebellum, and pineal gland). Low expression in lung and heart. No expression in submandibular gland, thymus, liver, spleen, adrenal, and kidney.

The protein localises to the cell membrane. Functionally, cadherins are calcium-dependent cell adhesion proteins. They preferentially interact with themselves in a homophilic manner in connecting cells; cadherins may thus contribute to the sorting of heterogeneous cell types. PB-cadherins may have a role in the morphological organization of pituitary gland and brain tissues. This chain is Cadherin-22 (Cdh22), found in Rattus norvegicus (Rat).